Consider the following 217-residue polypeptide: Large ribosomal subunit protein uL1 (217 aa).

Belongs to the universal ribosomal protein uL1 family. In terms of assembly, component of the large ribosomal subunit.

It localises to the cytoplasm. Its function is as follows. Component of the large ribosomal subunit. The ribosome is a large ribonucleoprotein complex responsible for the synthesis of proteins in the cell. The polypeptide is Large ribosomal subunit protein uL1 (rpl10a) (Xenopus laevis (African clawed frog)).